Consider the following 468-residue polypeptide: Chromosomal replication initiator protein DnaA (468 aa).

Positions 1-84 are domain I, interacts with DnaA modulators; the sequence is MSSSLWLQCL…RFEVGSRPVA (84 aa). Residues 81–104 form a disordered region; the sequence is RPVAAPKPAPTRTPADVAAESSAP. Positions 84-131 are domain II; it reads AAPKPAPTRTPADVAAESSAPAQLQARKPVHKTWDDDAQAIADINHRS. Residues 132 to 348 are domain III, AAA+ region; it reads NVNPKHKFNN…GALNRVIANA (217 aa). Residues G176, G178, K179, and T180 each contribute to the ATP site. Residues 349–468 form a domain IV, binds dsDNA region; the sequence is NFTGRPITID…YSNLIRTLSS (120 aa).

It belongs to the DnaA family. In terms of assembly, oligomerizes as a right-handed, spiral filament on DNA at oriC.

The protein localises to the cytoplasm. Its function is as follows. Plays an essential role in the initiation and regulation of chromosomal replication. ATP-DnaA binds to the origin of replication (oriC) to initiate formation of the DNA replication initiation complex once per cell cycle. Binds the DnaA box (a 9 base pair repeat at the origin) and separates the double-stranded (ds)DNA. Forms a right-handed helical filament on oriC DNA; dsDNA binds to the exterior of the filament while single-stranded (ss)DNA is stabiized in the filament's interior. The ATP-DnaA-oriC complex binds and stabilizes one strand of the AT-rich DNA unwinding element (DUE), permitting loading of DNA polymerase. After initiation quickly degrades to an ADP-DnaA complex that is not apt for DNA replication. Binds acidic phospholipids. The chain is Chromosomal replication initiator protein DnaA from Vibrio campbellii (strain ATCC BAA-1116).